Consider the following 254-residue polypeptide: Alcohol dehydrogenase (254 aa).

Position 1 is an N-acetylmethionine (methionine 1). NAD(+) is bound at residue 10-33 (FVAALGGIGLDTSRELVKRNLKNF). Serine 138 contacts substrate. The Proton acceptor role is filled by tyrosine 151.

This sequence belongs to the short-chain dehydrogenases/reductases (SDR) family. Homodimer.

It catalyses the reaction a primary alcohol + NAD(+) = an aldehyde + NADH + H(+). The catalysed reaction is a secondary alcohol + NAD(+) = a ketone + NADH + H(+). In Drosophila lebanonensis (Fruit fly), this protein is Alcohol dehydrogenase (Adh).